The sequence spans 91 residues: Small ribosomal subunit protein bS18 (91 aa).

Positions 1-14 are enriched in low complexity; the sequence is MTNQNQSQTQTTQT. A disordered region spans residues 1 to 24; the sequence is MTNQNQSQTQTTQTVEKVSSRQKK.

Belongs to the bacterial ribosomal protein bS18 family. As to quaternary structure, part of the 30S ribosomal subunit. Forms a tight heterodimer with protein bS6.

In terms of biological role, binds as a heterodimer with protein bS6 to the central domain of the 16S rRNA, where it helps stabilize the platform of the 30S subunit. In Caldicellulosiruptor saccharolyticus (strain ATCC 43494 / DSM 8903 / Tp8T 6331), this protein is Small ribosomal subunit protein bS18.